We begin with the raw amino-acid sequence, 538 residues long: Carboxypeptidase 2 (538 aa).

An N-terminal signal peptide occupies residues 1-21 (MVAYRFLTLISLGLGSHCVSA). The N-linked (GlcNAc...) asparagine glycan is linked to asparagine 46. The interval 53–76 (PAFTSPGTVSRGFSDGTSGPTRDE) is disordered. Residues 71 to 351 (GPTRDETMEG…VMAKSVLQTA (281 aa)) form the Peptidase M14 domain. Residues histidine 136, glutamate 139, and histidine 224 each coordinate Zn(2+). The active-site Proton donor/acceptor is glutamate 322. Asparagine 393 and asparagine 459 each carry an N-linked (GlcNAc...) asparagine glycan.

This sequence belongs to the peptidase M14 family. The cofactor is Zn(2+).

It localises to the secreted. In terms of biological role, extracellular metalloprotease that contributes to pathogenicity. The chain is Carboxypeptidase 2 (MCPB) from Trichophyton rubrum (Athlete's foot fungus).